We begin with the raw amino-acid sequence, 218 residues long: Small ribosomal subunit protein uS3c (218 aa).

The 72-residue stretch at 47–118 folds into the KH type-2 domain; sequence VQKNMRTSSG…KLNIAVTRIA (72 aa).

The protein belongs to the universal ribosomal protein uS3 family. In terms of assembly, part of the 30S ribosomal subunit.

The protein localises to the plastid. It localises to the chloroplast. The polypeptide is Small ribosomal subunit protein uS3c (rps3) (Solanum lycopersicum (Tomato)).